The sequence spans 210 residues: MTYAVKEIFYTLQGEGANAGRPAVFCRFAGCNLWSGREEDRAQAVCRFCDTDFVGTDGENGGKFKDADALVATIAGLWPAGEAHRFVVCTGGEPMLQLDQPLVDALHAAGFGIAIETNGSLPVLESIDWICVSPKADAPLVVTKGNELKVVIPQDNQRLADYAKLDFEYFLVQPMDGPSRDLNTKLAIDWCKRHPQWRLSMQTHKYLNIP.

Residues 12–14 and Arg27 contribute to the substrate site; that span reads LQG. In terms of domain architecture, Radical SAM core spans 18 to 210; the sequence is NAGRPAVFCR…MQTHKYLNIP (193 aa). Positions 31, 46, and 49 each coordinate [4Fe-4S] cluster. An S-adenosyl-L-methionine-binding site is contributed by 48–50; that stretch reads FCD. Thr51 contributes to the Mg(2+) binding site. Thr90 is a binding site for substrate. S-adenosyl-L-methionine-binding positions include Gly92, 133 to 135, and 173 to 176; these read SPK and QPMD. Pro210 serves as a coordination point for substrate.

This sequence belongs to the radical SAM superfamily. 7-carboxy-7-deazaguanine synthase family. Homodimer. [4Fe-4S] cluster serves as cofactor. Requires S-adenosyl-L-methionine as cofactor. It depends on Mg(2+) as a cofactor.

The catalysed reaction is 6-carboxy-5,6,7,8-tetrahydropterin + H(+) = 7-carboxy-7-deazaguanine + NH4(+). The protein operates within purine metabolism; 7-cyano-7-deazaguanine biosynthesis. Functionally, catalyzes the complex heterocyclic radical-mediated conversion of 6-carboxy-5,6,7,8-tetrahydropterin (CPH4) to 7-carboxy-7-deazaguanine (CDG), a step common to the biosynthetic pathways of all 7-deazapurine-containing compounds. This is 7-carboxy-7-deazaguanine synthase from Burkholderia multivorans (strain ATCC 17616 / 249).